Reading from the N-terminus, the 258-residue chain is Thrombin-like enzyme ancrod-2 (258 aa).

The N-terminal stretch at M1–A18 is a signal peptide. The propeptide occupies Q19 to L24. The Peptidase S1 domain occupies V25 to A251. Cystine bridges form between C31–C165, C52–C68, C102–C256, C144–C212, C176–C191, and C202–C227. Active-site charge relay system residues include H67 and D112. N-linked (GlcNAc...) asparagine glycosylation is found at N123 and N172. S206 serves as the catalytic Charge relay system. N253 carries N-linked (GlcNAc...) asparagine glycosylation.

Belongs to the peptidase S1 family. Snake venom subfamily. As to quaternary structure, monomer. As to expression, expressed by the venom gland.

It is found in the secreted. The catalysed reaction is Selective cleavage of Arg-|-Xaa bond in fibrinogen, to form fibrin, and release fibrinopeptide A. The specificity of further degradation of fibrinogen varies with species origin of the enzyme.. Thrombin-like snake venom serine protease. Cleaves fibrinogen (FGA) to split of fibrinopeptides AM, AO, and AY; the aberrant fibrinogen is then incapable of being cross-linked, forming easily dispersible clots. The sequence is that of Thrombin-like enzyme ancrod-2 from Calloselasma rhodostoma (Malayan pit viper).